Reading from the N-terminus, the 157-residue chain is UPF0225 protein PSPTO_4127 (157 aa).

This sequence belongs to the UPF0225 family.

This chain is UPF0225 protein PSPTO_4127, found in Pseudomonas syringae pv. tomato (strain ATCC BAA-871 / DC3000).